Reading from the N-terminus, the 604-residue chain is MDREFIRNFSIIAHIDHGKSTLADRLLEVTGALSQREMMEQVLDSMDLERERGITIKAHAVRLNYRADDGKLYQLNLIDTPGHVDFSYEVSRSLQACEGALLVVDASQGVEAQTLANTYLALHHNLEIIPVINKIDLPAAEPERIREQIETVVGIDARDAVLCSAKQGVGIHDILEAIVHLVPPPKGSPDAPLRALIFDSWFDSYRGVIILMRIIDGRMKLGQKIKLMANGQVFEVEGLGYQAPKATACSELQAGEVGFLYANIKTVGDAKIGDTITEVENPATEPLPGFEEIKPMVFAGLYPVESHEHGLLRDALEKLRLNDSAFNFEPENSAALGFGFRCGFLGLLHLEIVQERLEREFNIDLITTAPGVRYRITDTSGNLVEVDNPTKFPDPSYIETIEEPIIDASVITREDFLGGILALLEEKRGTQKKFEHIGAGRVMLTYELPLNEIVLDFYDRLKSASKGYASLDYHLSGYRESPMVKLDVLVAGEPVDALSIIVHKDFAFERGKALISRLRKLIPKQMFEVALQAAIGNKIVARETISAMRKNVIAKCYGGDISRKRKLLEKQKEGKKRMKRVGRVEIPQEAFLSVLKVSQSSDDD.

Positions 4–186 (EFIRNFSIIA…AIVHLVPPPK (183 aa)) constitute a tr-type G domain. Residues 16–21 (DHGKST) and 133–136 (NKID) contribute to the GTP site.

It belongs to the TRAFAC class translation factor GTPase superfamily. Classic translation factor GTPase family. LepA subfamily.

It is found in the cell inner membrane. It carries out the reaction GTP + H2O = GDP + phosphate + H(+). Its function is as follows. Required for accurate and efficient protein synthesis under certain stress conditions. May act as a fidelity factor of the translation reaction, by catalyzing a one-codon backward translocation of tRNAs on improperly translocated ribosomes. Back-translocation proceeds from a post-translocation (POST) complex to a pre-translocation (PRE) complex, thus giving elongation factor G a second chance to translocate the tRNAs correctly. Binds to ribosomes in a GTP-dependent manner. This chain is Elongation factor 4, found in Solibacter usitatus (strain Ellin6076).